We begin with the raw amino-acid sequence, 335 residues long: Methionine import ATP-binding protein MetN (335 aa).

The region spanning 2–241 (IQFQRLHKSY…PKHATTRRFV (240 aa)) is the ABC transporter domain. 38–45 (GHSGAGKS) lines the ATP pocket.

The protein belongs to the ABC transporter superfamily. Methionine importer (TC 3.A.1.24) family. In terms of assembly, the complex is composed of two ATP-binding proteins (MetN), two transmembrane proteins (MetI) and a solute-binding protein (MetQ).

The protein resides in the cell inner membrane. The enzyme catalyses L-methionine(out) + ATP + H2O = L-methionine(in) + ADP + phosphate + H(+). It catalyses the reaction D-methionine(out) + ATP + H2O = D-methionine(in) + ADP + phosphate + H(+). Its function is as follows. Part of the ABC transporter complex MetNIQ involved in methionine import. Responsible for energy coupling to the transport system. This is Methionine import ATP-binding protein MetN from Xanthomonas euvesicatoria pv. vesicatoria (strain 85-10) (Xanthomonas campestris pv. vesicatoria).